A 264-amino-acid chain; its full sequence is H-2 class II histocompatibility antigen, E-B beta chain (264 aa).

An N-terminal signal peptide occupies residues 1–26 (MVWLPRVPCVAAVILLLTVLSPPMAL). Residues 27 to 121 (VRDSRPWFLE…ISDKFLVRRR (95 aa)) form a beta-1 region. Over 27-225 (VRDSRPWFLE…KAQSTSAQNK (199 aa)) the chain is Extracellular. Disulfide bonds link cysteine 38–cysteine 106 and cysteine 144–cysteine 200. Asparagine 46 carries N-linked (GlcNAc...) asparagine glycosylation. Residues 122–225 (VEPTVTVYPT…KAQSTSAQNK (104 aa)) are beta-2. Residues 124-214 (PTVTVYPTKT…PSLTDPVTVE (91 aa)) form the Ig-like C1-type domain. The chain crosses the membrane as a helical span at residues 226-246 (MLSGVGGFVLGLLFLGAGLFI). The Cytoplasmic segment spans residues 247–264 (YFRNQKGQSGLQPTGLLS).

Belongs to the MHC class II family. In terms of processing, ubiquitinated in immature dendritic cells leading to down-regulation of MHC class II.

It localises to the membrane. In Mus musculus (Mouse), this protein is H-2 class II histocompatibility antigen, E-B beta chain (H2-Eb1).